We begin with the raw amino-acid sequence, 745 residues long: uncharacterized protein (745 aa).

The 99-residue stretch at 158-256 (NQVCDYIELH…HQTPKQYRGD (99 aa)) folds into the HTH araC/xylS-type domain. 2 consecutive DNA-binding regions (H-T-H motif) follow at residues 175-196 (SELS…TESL) and 223-246 (ITDI…KHFT).

This is an uncharacterized protein from Staphylococcus aureus (strain Mu50 / ATCC 700699).